The chain runs to 1020 residues: Non-canonical nonribosomal peptide synthetase hkm10 (1020 aa).

The interval 21 to 419 is adenylation (A) domain; it reads QMLEDPDAIA…GRFDHQVKIR (399 aa). The Carrier domain maps to 526–608; that stretch reads QDKVPSEGAS…QLAHIVDRNQ (83 aa). At S568 the chain carries O-(pantetheine 4'-phosphoryl)serine. The short-chain dehydrogenase/reductase (R) domain stretch occupies residues 652–894; it reads LTGATGFVGA…FVPIDYVTST (243 aa).

Belongs to the NRP synthetase family.

It functions in the pathway secondary metabolite biosynthesis. In terms of biological role, non-canonical nonribosomal peptide synthetase; part of the gene cluster that mediates the biosynthesis of hancockiamides, an unusual new family of N-cinnamoylated piperazines. The NRPS hkm10 and the NmrA-like reductase hkm9 are proposed to convert two molecules of L-Phe to the intermediary piperazine called xenocockiamide A. Xenocockiamide A is then converted to hancockiamide D via a series of hydroxylations and O-methylations. The tyrosinase hkm6 may catalyze an aromatic hydroxylation, then the 2-oxoglutarate-dependent Fe(II) dioxygenase hkm4 and the FAD-dependent phenol hydroxylase hkm7 may catalyze consecutive hydroxylations to install 2 more hydroxy groups, and the methyltransferase hkm8 probably catalyzes two methylations using 2 molecules of S-adenosyl-L-methionine (SAM). The NRPS hkm11 activates and transfers trans-cinnamate supplied by the PAL hkm12 to hancockiamide D and produces hancockiamide A. NRPS Hkm11 has the flexibility to tolerate the bulky hancockiamide G as a substrate and the absence of the acetyl-transferase hkm3 opens up the opportunity for hkm11 to introduce a second N-cinnamoyl moiety. The cytochrome P450 monooxygenase hkm5 catalyzes the methylenedioxy bridge formation, converting hancockiamide A into hancockiamide G. Hkm5 can also convert hancockiamide B into hancockiamide C, and hancockiamide D into hancockiamide H. The N-acetyltransferase hkm3 finally transfers an acetyl group to 1-N of piperazine, converting hancockiamide A into hancockiamide B and hancockiamide G into hancockiamide C. The protein is Non-canonical nonribosomal peptide synthetase hkm10 of Aspergillus hancockii.